A 102-amino-acid polypeptide reads, in one-letter code: Urease subunit beta (102 aa).

The protein belongs to the urease beta subunit family. In terms of assembly, heterotrimer of UreA (gamma), UreB (beta) and UreC (alpha) subunits. Three heterotrimers associate to form the active enzyme.

Its subcellular location is the cytoplasm. It catalyses the reaction urea + 2 H2O + H(+) = hydrogencarbonate + 2 NH4(+). Its pathway is nitrogen metabolism; urea degradation; CO(2) and NH(3) from urea (urease route): step 1/1. The polypeptide is Urease subunit beta (Alteromonas mediterranea (strain DSM 17117 / CIP 110805 / LMG 28347 / Deep ecotype)).